Here is a 539-residue protein sequence, read N- to C-terminus: Probable transcription factor GLK2 (539 aa).

The tract at residues 86 to 218 (FASSPDDEPP…NSHGKRKVKV (133 aa)) is disordered. Low complexity-rich tracts occupy residues 99–111 (SAPG…AAAG) and 121–130 (AAAAAAAAAA). Residues 144–161 (KKDDEERSSSLPEEKDAK) are compositionally biased toward basic and acidic residues. The region spanning 212–271 (GKRKVKVDWTPELHRRFVQAVEQLGIDKAVPSRILELMGIECLTRHNIASHLQKYRSHRK) is the HTH myb-type domain. Positions 242 to 267 (PSRILELMGIECLTRHNIASHLQKYR) form a DNA-binding region, H-T-H motif.

As to expression, expressed in leaves.

It localises to the nucleus. In terms of biological role, probable transcriptional activator that promotes chloroplast development. Acts as an activator of nuclear photosynthetic genes involved in chlorophyll biosynthesis, light harvesting, and electron transport. The chain is Probable transcription factor GLK2 (GLK2) from Oryza sativa subsp. japonica (Rice).